The chain runs to 377 residues: Guanine nucleotide-binding protein subunit alpha-13 (377 aa).

Residues Cys14 and Cys18 are each lipidated (S-palmitoyl cysteine). Residues Arg47 to Gln377 enclose the G-alpha domain. The segment at Lys50–Thr63 is G1 motif. GTP contacts are provided by residues Glu58–Thr63, Ser173, and Leu197–Arg200. Ser62 provides a ligand contact to Mg(2+). The tract at residues Asp195–Thr203 is G2 motif. Thr203 contributes to the Mg(2+) binding site. Thr203 is modified (phosphothreonine; by PKA). The tract at residues Phe218–Arg227 is G3 motif. The G4 motif stretch occupies residues Ile287–Asp294. Residues Asn291–Asp294 and Ala349 each bind GTP. The G5 motif stretch occupies residues Thr347–Thr352.

Belongs to the G-alpha family. G(12) subfamily. As to quaternary structure, g proteins are composed of 3 units; alpha, beta and gamma. The alpha chain contains the guanine nucleotide binding site. Interacts with UBXD5. Interacts with HAX1. Interacts (in GTP-bound form) with PPP5C (via TPR repeats); activates PPP5C phosphatase activity and translocates PPP5C to the cell membrane. Interacts with RGS22. Interacts (in GTP-bound form) with ARHGEF1. Interacts (in GTP-bound form) with ARHGEF11 (via RGS domain). Interacts (in GTP-bound form) with ARHGEF12 (via RGS domain). Interacts with CTNND1. Interacts with GASL2L2. Interacts with GPR35. Interacts with GPR174. In terms of processing, palmitoylation is critical for proper membrane localization and signaling. Phosphorylation on Thr-203 by PKA destabilizes the heterotrimer of alpha, beta and gamma, and inhibits Rho activation. As to expression, expressed in testis, including in Leydig cells and in the seminiferous epithelium, in differentiating cells from the spermatogonia to mature spermatozoa stages and round spermatids (at protein level). Expressed in 99.2% of spermatozoa from healthy individuals, but only in 28.6% of macrocephalic spermatozoa from infertile patients (at protein level).

The protein resides in the cell membrane. It is found in the melanosome. Its subcellular location is the cytoplasm. The protein localises to the nucleus. Its function is as follows. Guanine nucleotide-binding proteins (G proteins) are involved as modulators or transducers in various transmembrane signaling systems. Activates effector molecule RhoA by binding and activating RhoGEFs (ARHGEF1/p115RhoGEF, ARHGEF11/PDZ-RhoGEF and ARHGEF12/LARG). GNA13-dependent Rho signaling subsequently regulates transcription factor AP-1 (activating protein-1). Promotes tumor cell invasion and metastasis by activating RhoA/ROCK signaling pathway. Inhibits CDH1-mediated cell adhesion in a process independent from Rho activation. In lymphoid follicles, transmits P2RY8- and S1PR2-dependent signals that lead to inhibition of germinal center (GC) B cell growth and migration outside the GC niche. The chain is Guanine nucleotide-binding protein subunit alpha-13 (GNA13) from Homo sapiens (Human).